We begin with the raw amino-acid sequence, 396 residues long: Small ribosomal subunit protein mS27 (396 aa).

This sequence belongs to the mitochondrion-specific ribosomal protein mS27 family. Component of the mitochondrial small ribosomal subunit (mt-SSU). Mature N.crassa 74S mitochondrial ribosomes consist of a small (37S) and a large (54S) subunit. The 37S small subunit contains a 16S ribosomal RNA (16S mt-rRNA) and 32 different proteins. The 54S large subunit contains a 23S rRNA (23S mt-rRNA) and 42 different proteins.

The protein resides in the mitochondrion. Functionally, component of the mitochondrial ribosome (mitoribosome), a dedicated translation machinery responsible for the synthesis of mitochondrial genome-encoded proteins, including at least some of the essential transmembrane subunits of the mitochondrial respiratory chain. The mitoribosomes are attached to the mitochondrial inner membrane and translation products are cotranslationally integrated into the membrane. This chain is Small ribosomal subunit protein mS27 (mrp13), found in Neurospora crassa (strain ATCC 24698 / 74-OR23-1A / CBS 708.71 / DSM 1257 / FGSC 987).